Consider the following 1698-residue polypeptide: Bromodomain adjacent to zinc finger domain protein 2A (1698 aa).

Disordered regions lie at residues 240 to 262 and 352 to 387; these read QSTP…QLPS and VMQE…MTIE. Polar residues predominate over residues 377–387; sequence ENVSQDEMTIE. An MBD domain is found at 418 to 489; it reads IATPEQVCFP…EHFSFSPRMP (72 aa). 2 disordered regions span residues 524–550 and 610–653; these read RGRP…PPKV and EKEE…DRKL. Residues 528-540 show a composition bias toward basic and acidic residues; the sequence is RNLEKAKAKEQKA. A DNA-binding region (a.T hook 1) is located at residues 541–553; that stretch reads KRGRGRPPKVKMI. The stretch at 579-638 forms a coiled coil; sequence VQLCKLKKKMRRKARNQEAKLEAAKKLKEIKEKEEKKQKIQKAKNQEKAKNQEKKRTRRQ. The segment covering 610–632 has biased composition (basic and acidic residues); the sequence is EKEEKKQKIQKAKNQEKAKNQEK. The DDT domain maps to 701–766; the sequence is SCAFSDCLTT…LQAAMINPGL (66 aa). Disordered stretches follow at residues 884–905, 1013–1063, 1088–1110, and 1123–1149; these read ITTT…NDEL, SFGS…PLTN, TVLT…SEAT, and TPCR…TAAT. Basic and acidic residues predominate over residues 890 to 900; the sequence is SLRRRSERNAE. Composition is skewed to polar residues over residues 1023 to 1040 and 1051 to 1063; these read HPRN…SCHC and VTDQ…PLTN. A compositionally biased stretch (low complexity) spans 1091 to 1108; that stretch reads TPESSPPHSESTPIISSE. Positions 1124 to 1149 are enriched in polar residues; sequence PCRNHNQGLSTHSSNRLSPPSPTAAT. A DNA-binding region (a.T hook 3) is located at residues 1204 to 1216; the sequence is EKRRGRRPSKLLK. A PHD-type zinc finger spans residues 1476-1526; it reads KVTCLYCRKGDNDELLLLCDSCDRGCHTYCHRPRMNEIPEGDWFCPTCISL. The segment at 1549 to 1587 is disordered; that stretch reads FTEDSPSKPSRRREHPTASQFSPGESPASKKRRMGTRSQ. Residues 1585 to 1689 form the Bromo domain; that stretch reads RSQSPDLTFC…KFYDARWEEF (105 aa).

This sequence belongs to the WAL family. In terms of assembly, component of the NoRC complex, at least composed of SMARCA5/SNF2H and BAZ2A/TIP5.

The protein resides in the nucleus. It localises to the nucleolus. In terms of biological role, essential component of the NoRC (nucleolar remodeling complex) complex, a complex that mediates silencing of a fraction of rDNA by recruiting histone-modifying enzymes and DNA methyltransferases, leading to heterochromatin formation and transcriptional silencing. In the complex, it plays a central role by being recruited to rDNA and by targeting chromatin modifying enzymes such as HDAC1, leading to repress RNA polymerase I transcription. Recruited to rDNA via its interaction with TTF1 and its ability to recognize and bind histone H4 acetylated on 'Lys-16' (H4K16ac), leading to deacetylation of H4K5ac, H4K8ac, H4K12ac but not H4K16ac. Specifically binds pRNAs, 150-250 nucleotide RNAs that are complementary in sequence to the rDNA promoter; pRNA-binding is required for heterochromatin formation and rDNA silencing. The polypeptide is Bromodomain adjacent to zinc finger domain protein 2A (baz2a) (Xenopus laevis (African clawed frog)).